A 330-amino-acid chain; its full sequence is MISFSSFYKQISDSSLQHWLETLPSILGQWQRDHKHGSLPKWEKVLNKLHYPDADIIDFKTSVKIGSGEQLSDGEREKLENLLGIFKPWRKGPYSLHGVEIDTEWRSDWKWERVVPHISPLANRTVLDVGCGSGYHMWRMLGEGAKHVVGIDPSPLFMCQFEAVKRLAGNEHPVHFLPLGIEELPPLDAFDTVFSMGVLYHRRSPIDHIYQLRDQLRTGGELVLETLVIDGDENTVLVPKDRYGKMNNVWFLPSVDALMLWLKKCDFTDIRCVDVDVTSLAEQRSTQWMPNESLVDYLDPNDVSLTVEGYPAPKRATIIATKNQPNKDLI.

Carboxy-S-adenosyl-L-methionine contacts are provided by residues Lys91, Trp105, Lys110, Gly130, 152-154 (DPS), 181-182 (IE), Met196, Tyr200, and Arg315.

Belongs to the class I-like SAM-binding methyltransferase superfamily. CmoB family. In terms of assembly, homotetramer.

It carries out the reaction carboxy-S-adenosyl-L-methionine + 5-hydroxyuridine(34) in tRNA = 5-carboxymethoxyuridine(34) in tRNA + S-adenosyl-L-homocysteine + H(+). Functionally, catalyzes carboxymethyl transfer from carboxy-S-adenosyl-L-methionine (Cx-SAM) to 5-hydroxyuridine (ho5U) to form 5-carboxymethoxyuridine (cmo5U) at position 34 in tRNAs. The sequence is that of tRNA U34 carboxymethyltransferase from Shewanella pealeana (strain ATCC 700345 / ANG-SQ1).